A 143-amino-acid chain; its full sequence is Transcriptional regulatory protein RosR (143 aa).

The segment at 79-97 adopts a C2H3-type zinc-finger fold; it reads CLECGGNFKSLKRHLMTHH.

It belongs to the ros/MucR family.

This is Transcriptional regulatory protein RosR (rosR) from Rhizobium etli (strain ATCC 51251 / DSM 11541 / JCM 21823 / NBRC 15573 / CFN 42).